The primary structure comprises 440 residues: Coenzyme A disulfide reductase (440 aa).

8 to 33 (GAVAGGATCASQIRRLDKDSEITIFE) is a binding site for FAD. Substrate contacts are provided by Thr15, Gln19, Arg22, Ser39, and Asn42. The Nucleophile role is filled by Cys43. Cys43 serves as the catalytic Redox-active. Lys71 is a substrate binding site. 151-166 (ALVVGAGYISLEVLEN) is a binding site for NADP(+). 267 to 277 (TNIPNIYALGD) provides a ligand contact to FAD. A substrate-binding site is contributed by His299. Residue Tyr419 coordinates FAD. Lys427 lines the substrate pocket.

This sequence belongs to the class-III pyridine nucleotide-disulfide oxidoreductase family. In terms of assembly, homodimer. FAD serves as cofactor.

The enzyme catalyses NADP(+) + 2 CoA = CoA-disulfide + NADPH + H(+). Catalyzes specifically the NADPH-dependent reduction of coenzyme A disulfide. This is Coenzyme A disulfide reductase from Staphylococcus haemolyticus (strain JCSC1435).